A 184-amino-acid chain; its full sequence is Ribosome maturation factor RimM (184 aa).

One can recognise a PRC barrel domain in the interval 101–180; it reads EGEFFYCDLV…KITTHNAKTL (80 aa).

This sequence belongs to the RimM family. In terms of assembly, binds ribosomal protein uS19.

Its subcellular location is the cytoplasm. In terms of biological role, an accessory protein needed during the final step in the assembly of 30S ribosomal subunit, possibly for assembly of the head region. Essential for efficient processing of 16S rRNA. May be needed both before and after RbfA during the maturation of 16S rRNA. It has affinity for free ribosomal 30S subunits but not for 70S ribosomes. The polypeptide is Ribosome maturation factor RimM (Helicobacter pylori (strain ATCC 700392 / 26695) (Campylobacter pylori)).